The following is a 602-amino-acid chain: Prostaglandin G/H synthase 1 (602 aa).

The signal sequence occupies residues methionine 1–leucine 26. Positions proline 34–threonine 72 constitute an EGF-like domain. Intrachain disulfides connect cysteine 38-cysteine 49, cysteine 39-cysteine 161, cysteine 43-cysteine 59, and cysteine 61-cysteine 71. N-linked (GlcNAc...) asparagine glycans are attached at residues asparagine 70, asparagine 106, and asparagine 146. Histidine 209 serves as the catalytic Proton acceptor. Tyrosine 387 serves as the catalytic For cyclooxygenase activity. Position 390 (histidine 390) interacts with heme b. Cysteine 571 and cysteine 577 are disulfide-bonded.

It belongs to the prostaglandin G/H synthase family. As to quaternary structure, homodimer. The cofactor is heme b.

The protein localises to the microsome membrane. The protein resides in the endoplasmic reticulum membrane. It catalyses the reaction (5Z,8Z,11Z,14Z)-eicosatetraenoate + AH2 + 2 O2 = prostaglandin H2 + A + H2O. The catalysed reaction is (5Z,8Z,11Z,14Z)-eicosatetraenoate + 2 O2 = prostaglandin G2. It carries out the reaction prostaglandin G2 + AH2 = prostaglandin H2 + A + H2O. The enzyme catalyses (9Z,12Z)-octadecadienoate + AH2 + O2 = (9R)-hydroxy-(10E,12Z)-octadecadienoate + A + H2O. It catalyses the reaction (9Z,12Z)-octadecadienoate + AH2 + O2 = (9S)-hydroxy-(10E,12Z)-octadecadienoate + A + H2O. The catalysed reaction is (9Z,12Z)-octadecadienoate + AH2 + O2 = (13S)-hydroxy-(9Z,11E)-octadecadienoate + A + H2O. It carries out the reaction (9Z,12Z)-octadecadienoate + AH2 + O2 = (13R)-hydroxy-(9Z,11E)-octadecadienoate + A + H2O. It functions in the pathway lipid metabolism; prostaglandin biosynthesis. Its activity is regulated as follows. The cyclooxygenase activity is inhibited by nonsteroidal anti-inflammatory drugs (NSAIDs) including ibuprofen, flurbiprofen, ketoprofen, naproxen, flurbiprofen, anirolac, fenclofenac and diclofenac. Its function is as follows. Dual cyclooxygenase and peroxidase that plays an important role in the biosynthesis pathway of prostanoids, a class of C20 oxylipins mainly derived from arachidonate ((5Z,8Z,11Z,14Z)-eicosatetraenoate, AA, C20:4(n-6)), with a particular role in the inflammatory response. The cyclooxygenase activity oxygenates AA to the hydroperoxy endoperoxide prostaglandin G2 (PGG2), and the peroxidase activity reduces PGG2 to the hydroxy endoperoxide prostaglandin H2 (PGH2), the precursor of all 2-series prostaglandins and thromboxanes. This complex transformation is initiated by abstraction of hydrogen at carbon 13 (with S-stereochemistry), followed by insertion of molecular O2 to form the endoperoxide bridge between carbon 9 and 11 that defines prostaglandins. The insertion of a second molecule of O2 (bis-oxygenase activity) yields a hydroperoxy group in PGG2 that is then reduced to PGH2 by two electrons. Involved in the constitutive production of prostanoids in particular in the stomach and platelets. In gastric epithelial cells, it is a key step in the generation of prostaglandins, such as prostaglandin E2 (PGE2), which plays an important role in cytoprotection. In platelets, it is involved in the generation of thromboxane A2 (TXA2), which promotes platelet activation and aggregation, vasoconstriction and proliferation of vascular smooth muscle cells. Can also use linoleate (LA, (9Z,12Z)-octadecadienoate, C18:2(n-6)) as substrate and produce hydroxyoctadecadienoates (HODEs) in a regio- and stereospecific manner, being (9R)-HODE ((9R)-hydroxy-(10E,12Z)-octadecadienoate) and (13S)-HODE ((13S)-hydroxy-(9Z,11E)-octadecadienoate) its major products. The polypeptide is Prostaglandin G/H synthase 1 (Mus musculus (Mouse)).